We begin with the raw amino-acid sequence, 467 residues long: Chromosomal replication initiator protein DnaA (467 aa).

Residues 1-90 (MSLSLWQQCL…KPVTQTPQAA (90 aa)) form a domain I, interacts with DnaA modulators region. The domain II stretch occupies residues 91–130 (VTSNVAAPAQVAQTQPQRAAPSTRSGWDNVPAPAEPTYRS). The span at 98-111 (PAQVAQTQPQRAAP) shows a compositional bias: low complexity. The disordered stretch occupies residues 98–119 (PAQVAQTQPQRAAPSTRSGWDN). Residues 131–347 (NVNVKHTFDN…GALNRVIANA (217 aa)) form a domain III, AAA+ region region. Residues Gly175, Gly177, Lys178, and Thr179 each contribute to the ATP site. The segment at 348–467 (NFTGRAITID…FSNLIRTLSS (120 aa)) is domain IV, binds dsDNA.

The protein belongs to the DnaA family. As to quaternary structure, oligomerizes as a right-handed, spiral filament on DNA at oriC.

The protein resides in the cytoplasm. In terms of biological role, plays an essential role in the initiation and regulation of chromosomal replication. ATP-DnaA binds to the origin of replication (oriC) to initiate formation of the DNA replication initiation complex once per cell cycle. Binds the DnaA box (a 9 base pair repeat at the origin) and separates the double-stranded (ds)DNA. Forms a right-handed helical filament on oriC DNA; dsDNA binds to the exterior of the filament while single-stranded (ss)DNA is stabiized in the filament's interior. The ATP-DnaA-oriC complex binds and stabilizes one strand of the AT-rich DNA unwinding element (DUE), permitting loading of DNA polymerase. After initiation quickly degrades to an ADP-DnaA complex that is not apt for DNA replication. Binds acidic phospholipids. This Shigella boydii serotype 4 (strain Sb227) protein is Chromosomal replication initiator protein DnaA.